We begin with the raw amino-acid sequence, 344 residues long: Leucine-rich repeat-containing protein 75A (344 aa).

The interval 1-25 (MGTRQTKGSLAERASPGAAPGPRRE) is disordered. The span at 11 to 21 (AERASPGAAPG) shows a compositional bias: low complexity. LRR repeat units lie at residues 204–217 (VDSV…LTDD) and 229–242 (LPRL…GNRL). Residues 295–344 (LPTILELGEGPGSGEEVREGTVGQEDPGGGPVAPAEDHHEGKETVAAAQT) are disordered.

Belongs to the LRRC75 family.

The polypeptide is Leucine-rich repeat-containing protein 75A (LRRC75A) (Homo sapiens (Human)).